The following is a 284-amino-acid chain: Proteasome subunit beta (284 aa).

Positions 1 to 56 (MSPMESSSTRFPGQALPAAYLTPGSSSFTDFLRVAAPELMPGSRPVPDGAVEAPHG) are cleaved as a propeptide — removed in mature form; by autocatalysis. The active-site Nucleophile is the T57.

Belongs to the peptidase T1B family. The 20S proteasome core is composed of 14 alpha and 14 beta subunits that assemble into four stacked heptameric rings, resulting in a barrel-shaped structure. The two inner rings, each composed of seven catalytic beta subunits, are sandwiched by two outer rings, each composed of seven alpha subunits. The catalytic chamber with the active sites is on the inside of the barrel. Has a gated structure, the ends of the cylinder being occluded by the N-termini of the alpha-subunits. Is capped by the proteasome-associated ATPase, ARC.

It is found in the cytoplasm. It carries out the reaction Cleavage of peptide bonds with very broad specificity.. It functions in the pathway protein degradation; proteasomal Pup-dependent pathway. Its activity is regulated as follows. The formation of the proteasomal ATPase ARC-20S proteasome complex, likely via the docking of the C-termini of ARC into the intersubunit pockets in the alpha-rings, may trigger opening of the gate for substrate entry. Interconversion between the open-gate and close-gate conformations leads to a dynamic regulation of the 20S proteasome proteolysis activity. Functionally, component of the proteasome core, a large protease complex with broad specificity involved in protein degradation. The polypeptide is Proteasome subunit beta (Saccharopolyspora erythraea (strain ATCC 11635 / DSM 40517 / JCM 4748 / NBRC 13426 / NCIMB 8594 / NRRL 2338)).